Here is a 144-residue protein sequence, read N- to C-terminus: Ribosome-binding factor A (144 aa).

The disordered stretch occupies residues 121–144; it reads KAQTGVEEPLENTAEGEENPSGGE. Residues 128 to 138 show a composition bias toward acidic residues; it reads EPLENTAEGEE.

This sequence belongs to the RbfA family. Monomer. Binds 30S ribosomal subunits, but not 50S ribosomal subunits or 70S ribosomes.

The protein resides in the cytoplasm. Functionally, one of several proteins that assist in the late maturation steps of the functional core of the 30S ribosomal subunit. Associates with free 30S ribosomal subunits (but not with 30S subunits that are part of 70S ribosomes or polysomes). Required for efficient processing of 16S rRNA. May interact with the 5'-terminal helix region of 16S rRNA. The protein is Ribosome-binding factor A of Synechococcus sp. (strain JA-2-3B'a(2-13)) (Cyanobacteria bacterium Yellowstone B-Prime).